Reading from the N-terminus, the 263-residue chain is MNVGFLGFGAMGRALAEGLVHAGALQAAQVYACALNQEKLRAQCTSLGIGACASVQELVQKSEWIFLAVKPSQISTVLRDRQSFQGKVLISLAAGMSCAAYEALFAADPHQGIRHLSLLPNLPCQVARGVIIAEARHTLHHDEHAALLAVLRTVAQVEVVDTAYFAIAGVIAGCAPAFAAQFIEALADAGVRYGLARDQAYRLAAHMLEGTAALIQHSGVHPAQLKDRVCSPAGSTIRGVLALEEQGLRRAVIHAVRAALSSS.

The protein belongs to the pyrroline-5-carboxylate reductase family.

The protein localises to the cytoplasm. It catalyses the reaction L-proline + NADP(+) = (S)-1-pyrroline-5-carboxylate + NADPH + 2 H(+). The catalysed reaction is L-proline + NAD(+) = (S)-1-pyrroline-5-carboxylate + NADH + 2 H(+). Its pathway is amino-acid biosynthesis; L-proline biosynthesis; L-proline from L-glutamate 5-semialdehyde: step 1/1. Functionally, catalyzes the reduction of 1-pyrroline-5-carboxylate (PCA) to L-proline. This chain is Pyrroline-5-carboxylate reductase, found in Treponema pallidum (strain Nichols).